The sequence spans 336 residues: Phospho-N-acetylmuramoyl-pentapeptide-transferase (336 aa).

A run of 10 helical transmembrane segments spans residues 3-23 (LTLI…PYFI), 53-73 (GGTV…LFSI), 78-98 (SLAL…IGFL), 118-138 (LALQ…PSGI), 143-163 (VFGY…FWVV), 174-194 (GIDG…GVIA), 200-220 (FDVL…FCFN), 226-246 (VFMG…ISIA), 254-274 (LIIG…VFYF), and 316-336 (AFLW…LYVF).

It belongs to the glycosyltransferase 4 family. MraY subfamily. It depends on Mg(2+) as a cofactor.

It is found in the cell membrane. The catalysed reaction is UDP-N-acetyl-alpha-D-muramoyl-L-alanyl-gamma-D-glutamyl-L-lysyl-D-alanyl-D-alanine + di-trans,octa-cis-undecaprenyl phosphate = Mur2Ac(oyl-L-Ala-gamma-D-Glu-L-Lys-D-Ala-D-Ala)-di-trans,octa-cis-undecaprenyl diphosphate + UMP. It functions in the pathway cell wall biogenesis; peptidoglycan biosynthesis. Its function is as follows. Catalyzes the initial step of the lipid cycle reactions in the biosynthesis of the cell wall peptidoglycan: transfers peptidoglycan precursor phospho-MurNAc-pentapeptide from UDP-MurNAc-pentapeptide onto the lipid carrier undecaprenyl phosphate, yielding undecaprenyl-pyrophosphoryl-MurNAc-pentapeptide, known as lipid I. This chain is Phospho-N-acetylmuramoyl-pentapeptide-transferase, found in Streptococcus pyogenes serotype M18 (strain MGAS8232).